Reading from the N-terminus, the 166-residue chain is Ribosome-binding factor A (166 aa).

Residues 122-166 (HVADETDVEDSTDHEDDVTNSEDETKHVDIDTDSEEGTNTDGKAQ) form a disordered region. A compositionally biased stretch (acidic residues) spans 126–143 (ETDVEDSTDHEDDVTNSE).

It belongs to the RbfA family. In terms of assembly, monomer. Binds 30S ribosomal subunits, but not 50S ribosomal subunits or 70S ribosomes.

The protein localises to the cytoplasm. Functionally, one of several proteins that assist in the late maturation steps of the functional core of the 30S ribosomal subunit. Associates with free 30S ribosomal subunits (but not with 30S subunits that are part of 70S ribosomes or polysomes). Required for efficient processing of 16S rRNA. May interact with the 5'-terminal helix region of 16S rRNA. The chain is Ribosome-binding factor A from Pseudoalteromonas translucida (strain TAC 125).